The following is a 448-amino-acid chain: tRNA wybutosine-synthesizing protein 2 homolog (448 aa).

Residues S218, K225, E265, and 293–294 contribute to the S-adenosyl-L-methionine site; that span reads DN.

Belongs to the class I-like SAM-binding methyltransferase superfamily. TRM5/TYW2 family.

It catalyses the reaction 4-demethylwyosine(37) in tRNA(Phe) + S-adenosyl-L-methionine = 4-demethyl-7-[(3S)-3-amino-3-carboxypropyl]wyosine(37) in tRNA(Phe) + S-methyl-5'-thioadenosine + H(+). The protein operates within tRNA modification; wybutosine-tRNA(Phe) biosynthesis. Its function is as follows. S-adenosyl-L-methionine-dependent transferase that acts as a component of the wybutosine biosynthesis pathway. Wybutosine is a hyper modified guanosine with a tricyclic base found at the 3'-position adjacent to the anticodon of eukaryotic phenylalanine tRNA. Catalyzes the transfer of the alpha-amino-alpha-carboxypropyl (acp) group from S-adenosyl-L-methionine to the C-7 position of 4-demethylwyosine (imG-14) to produce wybutosine-86. The protein is tRNA wybutosine-synthesizing protein 2 homolog (TRMT12) of Homo sapiens (Human).